A 133-amino-acid polypeptide reads, in one-letter code: S-adenosylmethionine decarboxylase proenzyme (133 aa).

The active-site Schiff-base intermediate with substrate; via pyruvic acid is the serine 64. Serine 64 is modified (pyruvic acid (Ser); by autocatalysis). Histidine 69 acts as the Proton acceptor; for processing activity in catalysis. The Proton donor; for catalytic activity role is filled by cysteine 84.

This sequence belongs to the prokaryotic AdoMetDC family. Type 1 subfamily. Heterotetramer of two alpha and two beta chains arranged as a dimer of alpha/beta heterodimers. Requires pyruvate as cofactor. Post-translationally, is synthesized initially as an inactive proenzyme. Formation of the active enzyme involves a self-maturation process in which the active site pyruvoyl group is generated from an internal serine residue via an autocatalytic post-translational modification. Two non-identical subunits are generated from the proenzyme in this reaction, and the pyruvate is formed at the N-terminus of the alpha chain, which is derived from the carboxyl end of the proenzyme. The post-translation cleavage follows an unusual pathway, termed non-hydrolytic serinolysis, in which the side chain hydroxyl group of the serine supplies its oxygen atom to form the C-terminus of the beta chain, while the remainder of the serine residue undergoes an oxidative deamination to produce ammonia and the pyruvoyl group blocking the N-terminus of the alpha chain.

It catalyses the reaction S-adenosyl-L-methionine + H(+) = S-adenosyl 3-(methylsulfanyl)propylamine + CO2. It functions in the pathway amine and polyamine biosynthesis; S-adenosylmethioninamine biosynthesis; S-adenosylmethioninamine from S-adenosyl-L-methionine: step 1/1. Functionally, catalyzes the decarboxylation of S-adenosylmethionine to S-adenosylmethioninamine (dcAdoMet), the propylamine donor required for the synthesis of the polyamines spermine and spermidine from the diamine putrescine. This chain is S-adenosylmethionine decarboxylase proenzyme, found in Persephonella marina (strain DSM 14350 / EX-H1).